A 249-amino-acid polypeptide reads, in one-letter code: 4-hydroxy-tetrahydrodipicolinate reductase (249 aa).

Residues Asp-32, Gly-74 to Thr-76, and Ser-99 to Phe-102 contribute to the NAD(+) site. His-134 functions as the Proton donor/acceptor in the catalytic mechanism. Residue His-135 coordinates (S)-2,3,4,5-tetrahydrodipicolinate. Catalysis depends on Lys-138, which acts as the Proton donor. Position 144–145 (Gly-144–Thr-145) interacts with (S)-2,3,4,5-tetrahydrodipicolinate.

The protein belongs to the DapB family.

The protein resides in the cytoplasm. It carries out the reaction (S)-2,3,4,5-tetrahydrodipicolinate + NAD(+) + H2O = (2S,4S)-4-hydroxy-2,3,4,5-tetrahydrodipicolinate + NADH + H(+). The catalysed reaction is (S)-2,3,4,5-tetrahydrodipicolinate + NADP(+) + H2O = (2S,4S)-4-hydroxy-2,3,4,5-tetrahydrodipicolinate + NADPH + H(+). Its pathway is amino-acid biosynthesis; L-lysine biosynthesis via DAP pathway; (S)-tetrahydrodipicolinate from L-aspartate: step 4/4. In terms of biological role, catalyzes the conversion of 4-hydroxy-tetrahydrodipicolinate (HTPA) to tetrahydrodipicolinate. This chain is 4-hydroxy-tetrahydrodipicolinate reductase, found in Chlorobaculum parvum (strain DSM 263 / NCIMB 8327) (Chlorobium vibrioforme subsp. thiosulfatophilum).